The sequence spans 264 residues: uncharacterized protein (264 aa).

6 residues coordinate a divalent metal cation: histidine 5, histidine 7, glutamate 93, histidine 134, histidine 158, and aspartate 208.

This sequence belongs to the metallo-dependent hydrolases superfamily. TatD-type hydrolase family. A divalent metal cation serves as cofactor.

This is an uncharacterized protein from Mycobacterium tuberculosis (strain ATCC 25618 / H37Rv).